A 237-amino-acid chain; its full sequence is Apoptosis regulator OPG045 (237 aa).

It belongs to the orthopoxvirus OPG045 family. As to quaternary structure, interacts with host BAK1, BAX and BID.

It localises to the host mitochondrion outer membrane. The protein localises to the host cytoplasm. Its function is as follows. Plays a role in the inhibition of host apoptosis. Interacts with host BAX and thereby inhibits its activity. This chain is Apoptosis regulator OPG045 (OPG045), found in Homo sapiens (Human).